The primary structure comprises 60 residues: Arabinogalactan protein 14 (60 aa).

The signal sequence occupies residues 1-28 (MEAMKMKLYVVVLVAVIAFSTVHQTVAA). Residues proline 32, proline 34, and proline 36 each carry the 4-hydroxyproline modification. 3 O-linked (Ara...) hydroxyproline glycosylation sites follow: proline 32, proline 34, and proline 36. The GPI-anchor amidated serine moiety is linked to residue serine 38. The propeptide at 39 to 60 (DASSFIPTFFASVAVMAFGFFF) is removed in mature form.

Belongs to the AG-peptide AGP family. Post-translationally, contains 4-hydroxyproline; hydroxylated on Pro-32, Pro-34 and Pro-36. O-glycosylated on hydroxyprolines; noncontiguous hydroxylproline residues are glycosylated with arabinogalactan.

It is found in the cell membrane. Proteoglycan that seems to be implicated in diverse developmental roles such as differentiation, cell-cell recognition, embryogenesis and programmed cell death. Involved in the regulation of root hair elongation. In Arabidopsis thaliana (Mouse-ear cress), this protein is Arabinogalactan protein 14.